A 407-amino-acid chain; its full sequence is Lysosome-associated membrane glycoprotein 1 (407 aa).

The first 21 residues, 1-21 (MAAPGAPRSLLLLLLAGLAHG), serve as a signal peptide directing secretion. Residues 22 to 189 (ASALFVVKDS…SKEETRCTQD (168 aa)) are first lumenal domain. Residues 22–371 (ASALFVVKDS…VEECMQDGNN (350 aa)) are Lumenal-facing. 12 N-linked (GlcNAc...) asparagine glycosylation sites follow: Asn-32, Asn-40, Asn-57, Asn-72, Asn-79, Asn-98, Asn-102, Asn-116, Asn-125, Asn-145, Asn-160, and Asn-178. Cys-36 and Cys-75 are disulfide-bonded. A disulfide bridge links Cys-150 with Cys-186. Positions 183–206 (ETRCTQDGPSPTTVPPSPSPPLVP) are disordered. The interval 190–219 (GPSPTTVPPSPSPPLVPTNPTVIKYNVTGE) is hinge. Residues 194-206 (TTVPPSPSPPLVP) show a composition bias toward pro residues. 9 N-linked (GlcNAc...) asparagine glycosylation sites follow: Asn-215, Asn-220, Asn-233, Asn-241, Asn-253, Asn-283, Asn-297, Asn-304, and Asn-312. Positions 220 to 371 (NGTCLLASMA…VEECMQDGNN (152 aa)) are second lumenal domain. Cys-223 and Cys-260 are disulfide-bonded. Cys-328 and Cys-365 are oxidised to a cystine. Residues 372–395 (MLIPIAVGGALAGLVLIVLIAYLI) form a helical membrane-spanning segment. The Cytoplasmic segment spans residues 396–407 (GRKRSHAGYQTI).

This sequence belongs to the LAMP family. As to quaternary structure, interacts with ABCB9; this interaction strongly stabilizes ABCB9 and protects ABCB9 against lysosomal degradation. Interacts with FURIN. Interacts with TMEM175; inhibiting the proton channel activity of TMEM175. Post-translationally, O- and N-glycosylated; some of the N-glycans attached to LAMP-1 are polylactosaminoglycans.

It localises to the lysosome membrane. The protein resides in the endosome membrane. Its subcellular location is the late endosome membrane. It is found in the cell membrane. The protein localises to the cytolytic granule membrane. Its function is as follows. Lysosomal membrane glycoprotein which plays an important role in lysosome biogenesis, lysosomal pH regulation, autophagy and cholesterol homeostasis. Acts as an important regulator of lysosomal lumen pH regulation by acting as a direct inhibitor of the proton channel TMEM175, facilitating lysosomal acidification for optimal hydrolase activity. Also plays an important role in NK-cells cytotoxicity. Mechanistically, participates in cytotoxic granule movement to the cell surface and perforin trafficking to the lytic granule. In addition, protects NK-cells from degranulation-associated damage induced by their own cytotoxic granule content. Presents carbohydrate ligands to selectins. This Cricetulus griseus (Chinese hamster) protein is Lysosome-associated membrane glycoprotein 1 (LAMP1).